Here is a 292-residue protein sequence, read N- to C-terminus: Homoserine kinase (292 aa).

84-94 (PLARGMGSSSA) lines the ATP pocket.

Belongs to the GHMP kinase family. Homoserine kinase subfamily.

Its subcellular location is the cytoplasm. The catalysed reaction is L-homoserine + ATP = O-phospho-L-homoserine + ADP + H(+). Its pathway is amino-acid biosynthesis; L-threonine biosynthesis; L-threonine from L-aspartate: step 4/5. Catalyzes the ATP-dependent phosphorylation of L-homoserine to L-homoserine phosphate. In Thermus thermophilus (strain ATCC 27634 / DSM 579 / HB8), this protein is Homoserine kinase.